The following is an 89-amino-acid chain: Large ribosomal subunit protein bL27 (89 aa).

The segment at 1-22 is disordered; that stretch reads MAHKKAGGSSRNGRDSAGRRLG.

The protein belongs to the bacterial ribosomal protein bL27 family.

In Sphingopyxis alaskensis (strain DSM 13593 / LMG 18877 / RB2256) (Sphingomonas alaskensis), this protein is Large ribosomal subunit protein bL27.